Here is a 601-residue protein sequence, read N- to C-terminus: Kelch-like ECH-associated protein 1A (601 aa).

The BTB domain maps to 44–117 (MDELRHHEML…VISRLIDFAY (74 aa)). The BACK domain occupies 153-253 (KNLEPSNVIG…LNAVHIYALP (101 aa)). Kelch repeat units follow at residues 292 to 337 (PTPH…PCSG), 338 to 388 (LGAC…PRNR), 389 to 435 (VGVG…ARLG), 436 to 482 (AGVA…VRSG), 484 to 529 (GVVC…CRSA), and 530 to 576 (HGVS…GRSG).

This sequence belongs to the KEAP1 family. Homodimer and heterodimer; heterodimerizes with keap1b. Component of the BCR(KEAP1) E3 ubiquitin ligase complex, at least composed of 2 molecules of cul3, 2 molecules of keap1 (keap1a and/or keap1b), and rbx1. Interacts with nfe2l2/nrf2; the interaction is direct. Non-enzymatic covalent modifications of reactive cysteines by electrophile metabolites inactivate the BCR(KEAP1) complex. In terms of tissue distribution, widely expressed.

Its subcellular location is the cytoplasm. It is found in the nucleus. It participates in protein modification; protein ubiquitination. With respect to regulation, ubiquitin ligase activity of the BCR(KEAP1) complex is inhibited by oxidative stress and electrophile metabolites such as sulforaphane. Electrophile metabolites react with reactive cysteine residues in keap1 and trigger non-enzymatic covalent modifications of these cysteine residues, leading to inactivate the ubiquitin ligase activity of the BCR(KEAP1) complex. Functionally, substrate-specific adapter of a BCR (BTB-CUL3-RBX1) E3 ubiquitin ligase complex that regulates the response to oxidative stress by targeting nfe2l2/nrf2 for ubiquitination. Keap1 acts as a key sensor of oxidative and electrophilic stress: in normal conditions, the BCR(KEAP1) complex mediates ubiquitination and degradation of nfe2l2/nrf2, a transcription factor regulating expression of many cytoprotective genes. In response to oxidative stress, different electrophile metabolites trigger non-enzymatic covalent modifications of highly reactive cysteine residues in KEAP1, leading to inactivate the ubiquitin ligase activity of the BCR(KEAP1) complex, promoting nfe2l2/nrf2 nuclear accumulation and expression of phase II detoxifying enzymes. In Danio rerio (Zebrafish), this protein is Kelch-like ECH-associated protein 1A.